We begin with the raw amino-acid sequence, 48 residues long: Piguamerin (48 aa).

Cystine bridges form between cysteine 3-cysteine 14, cysteine 8-cysteine 19, cysteine 21-cysteine 41, cysteine 26-cysteine 45, and cysteine 30-cysteine 47. The 29-residue stretch at 19 to 47 folds into the Antistasin-like domain; sequence CVCVIGQCRKYCPNGFKKDENGCTFPCTC.

This sequence belongs to the protease inhibitor I15 (antistasin) family.

It is found in the secreted. Its function is as follows. Inhibits plasma and tissue kallikrein, and trypsin. May be involved in leech hematophagia. In Hirudo nipponia (Korean blood-sucking leech), this protein is Piguamerin.